The chain runs to 661 residues: uncharacterized protein (661 aa).

A run of 7 helical transmembrane segments spans residues 37–57 (VFLGLILALMVVVVALTLFLS), 87–107 (INSPAPWIGLVALAMAGAVFI), 120–140 (WLLLGVLLSLLFVVNGLNVIL), 158–178 (VFWQFLWIYGIVIVVAIPIIV), 243–263 (LLDILDSILTLISFTAILYTI), 266–286 (TLMWGLIGYAVFGTVVAIAIG), and 341–361 (FNLLIIWQALISLFQLGYNYF). One can recognise an ABC transmembrane type-1 domain in the interval 123 to 410 (LGVLLSLLFV…VTNQIQNITE (288 aa)). One can recognise an ABC transporter domain in the interval 453–659 (VALENVTLSP…AEGRWQISPI (207 aa)). 487 to 494 (GPSGSGKS) lines the ATP pocket.

It belongs to the ABC transporter superfamily.

It localises to the cell inner membrane. This is an uncharacterized protein from Synechocystis sp. (strain ATCC 27184 / PCC 6803 / Kazusa).